The primary structure comprises 219 residues: Uracil-DNA glycosylase (219 aa).

The Proton acceptor role is filled by Asp61.

The protein belongs to the uracil-DNA glycosylase (UDG) superfamily. UNG family.

It is found in the cytoplasm. The catalysed reaction is Hydrolyzes single-stranded DNA or mismatched double-stranded DNA and polynucleotides, releasing free uracil.. Its function is as follows. Excises uracil residues from the DNA which can arise as a result of misincorporation of dUMP residues by DNA polymerase or due to deamination of cytosine. The sequence is that of Uracil-DNA glycosylase from Haemophilus influenzae (strain 86-028NP).